The chain runs to 179 residues: Putative endogenous retrovirus group FC1 Env polyprotein (179 aa).

The signal sequence occupies residues 1-22 (MARPSPLCLLLLLTLLPPIVPS). The tract at residues 23–179 (NSLLTEPPFR…SKLRIFRTYV (157 aa)) is truncated surface protein. Residue N69 is glycosylated (N-linked (GlcNAc...) asparagine).

Belongs to the gamma type-C retroviral envelope protein family. HERV class-I F(c)1 env subfamily.

The protein resides in the virion. Functionally, retroviral envelope proteins mediate receptor recognition and membrane fusion during early infection. Endogenous envelope proteins may have kept, lost or modified their original function during evolution. The sequence is that of Putative endogenous retrovirus group FC1 Env polyprotein (ERVFC1) from Gorilla gorilla gorilla (Western lowland gorilla).